Consider the following 343-residue polypeptide: Nuclear distribution protein nudE-like 1 (343 aa).

Residues 25 to 190 (KYKQSFQEAR…LAVRERQQEV (166 aa)) are a coiled coil. Disordered stretches follow at residues 184 to 204 (RERQQEVTRKSAPSSPTLDCE) and 322 to 343 (QGTPGLGASRPSSAPGMLPLSV).

The protein belongs to the nudE family. In terms of processing, phosphorylated in mitosis.

It is found in the cytoplasm. The protein resides in the cytoskeleton. Its subcellular location is the microtubule organizing center. The protein localises to the centrosome. It localises to the spindle. In terms of biological role, required for organization of the cellular microtubule array and microtubule anchoring at the centrosome. Positively regulates the activity of the minus-end directed microtubule motor protein dynein. May enhance dynein-mediated microtubule sliding by targeting dynein to the microtubule plus end. Positively regulates lysosome peripheral distribution and ruffled border formation in osteoclasts. This Gallus gallus (Chicken) protein is Nuclear distribution protein nudE-like 1 (NDEL1).